Here is a 56-residue protein sequence, read N- to C-terminus: Ovomucoid (56 aa).

In terms of domain architecture, Kazal-like spans Val6–Cys56. 3 cysteine pairs are disulfide-bonded: Cys8-Cys38, Cys16-Cys35, and Cys24-Cys56. Asn45 carries an N-linked (GlcNAc...) asparagine glycan.

The protein localises to the secreted. This is Ovomucoid from Callipepla squamata pallida (Blue scaled quail).